The chain runs to 337 residues: tRNA N6-adenosine threonylcarbamoyltransferase (337 aa).

Fe cation-binding residues include histidine 111 and histidine 115. Substrate is bound by residues 134–138 (LVSGG), aspartate 167, glycine 180, and asparagine 272. Residue aspartate 300 participates in Fe cation binding.

This sequence belongs to the KAE1 / TsaD family. Fe(2+) is required as a cofactor.

Its subcellular location is the cytoplasm. It carries out the reaction L-threonylcarbamoyladenylate + adenosine(37) in tRNA = N(6)-L-threonylcarbamoyladenosine(37) in tRNA + AMP + H(+). In terms of biological role, required for the formation of a threonylcarbamoyl group on adenosine at position 37 (t(6)A37) in tRNAs that read codons beginning with adenine. Is involved in the transfer of the threonylcarbamoyl moiety of threonylcarbamoyl-AMP (TC-AMP) to the N6 group of A37, together with TsaE and TsaB. TsaD likely plays a direct catalytic role in this reaction. The chain is tRNA N6-adenosine threonylcarbamoyltransferase from Escherichia coli O127:H6 (strain E2348/69 / EPEC).